We begin with the raw amino-acid sequence, 446 residues long: G patch domain-containing protein 4 (446 aa).

Residue M1 is modified to N-acetylmethionine. Phosphothreonine is present on T4. The G-patch domain maps to 11–57; that stretch reads GMKFAEEQLLKHGWTQGKGLGRKENGITQALRVTLKQDTHGVGHDPA. K46 is covalently cross-linked (Glycyl lysine isopeptide (Lys-Gly) (interchain with G-Cter in SUMO2)). T116 bears the Phosphothreonine mark. Disordered regions lie at residues 116 to 140 and 188 to 446; these read TSGGEKPNKDLESCSDDDNQGSKSP and QDPG…KKRD. A phosphoserine mark is found at S128, S130, and S139. The stretch at 166 to 251 forms a coiled coil; that stretch reads TMKAKLARLE…KKKRRHQEGK (86 aa). A compositionally biased stretch (basic and acidic residues) spans 219-237; it reads ASERNDADEKHPEHAEQNI. Residues 238–248 are compositionally biased toward basic residues; sequence RKSKKKKRRHQ. Composition is skewed to basic and acidic residues over residues 249-268, 297-328, 363-375, and 392-409; these read EGKVSDEREGTTKGNEKEDA, HHEEEKMGVLEEGGKGKEAAGSVRTEEVESRA, REAESRACSDGRS, and LDVRDEKDGGAREAESRA. Basic residues-rich tracts occupy residues 416–427 and 437–446; these read RGKRKRQQHPKK and KAKKKQKKRD.

This is G patch domain-containing protein 4 (GPATCH4) from Homo sapiens (Human).